A 491-amino-acid chain; its full sequence is Probable protein phosphatase 2C 52 (491 aa).

A compositionally biased stretch (basic and acidic residues) spans 1–11; that stretch reads MVYDGAVKDQE. The disordered stretch occupies residues 1–211; the sequence is MVYDGAVKDQ…REREKERERV (211 aa). Positions 12–54 are enriched in low complexity; it reads SSANPASASAALSEASAAASEVTAAAAAGAGAGAAEEGAAVSG. The span at 66–78 shows a compositional bias: basic residues; sequence GVRHPLKHRRFRA. Over residues 95-105 the composition is skewed to acidic residues; sequence VADEEASEVEQ. The span at 187–211 shows a compositional bias: basic and acidic residues; that stretch reads VEEKKHKDQENKHKEREREKERERV. Residues 229–475 enclose the PPM-type phosphatase domain; it reads SCGYSSFRGK…DNITCIVVKF (247 aa). Residues aspartate 265, glycine 266, aspartate 427, and aspartate 466 each coordinate Mn(2+).

Belongs to the PP2C family. Requires Mg(2+) as cofactor. Mn(2+) is required as a cofactor.

The catalysed reaction is O-phospho-L-seryl-[protein] + H2O = L-seryl-[protein] + phosphate. The enzyme catalyses O-phospho-L-threonyl-[protein] + H2O = L-threonyl-[protein] + phosphate. This Oryza sativa subsp. japonica (Rice) protein is Probable protein phosphatase 2C 52.